The chain runs to 294 residues: Probable 2-(5''-triphosphoribosyl)-3'-dephosphocoenzyme-A synthase (294 aa).

This sequence belongs to the CitG/MdcB family.

The enzyme catalyses 3'-dephospho-CoA + ATP = 2'-(5''-triphospho-alpha-D-ribosyl)-3'-dephospho-CoA + adenine. The polypeptide is Probable 2-(5''-triphosphoribosyl)-3'-dephosphocoenzyme-A synthase (Streptococcus pyogenes serotype M5 (strain Manfredo)).